We begin with the raw amino-acid sequence, 79 residues long: ATP synthase subunit c (79 aa).

The next 2 helical transmembrane spans lie at 11-31 (MAAAIMMGLAAIGAAIGIGIL) and 53-73 (FFIVMGLVDAIPMIAVGLGLY).

The protein belongs to the ATPase C chain family. As to quaternary structure, F-type ATPases have 2 components, F(1) - the catalytic core - and F(0) - the membrane proton channel. F(1) has five subunits: alpha(3), beta(3), gamma(1), delta(1), epsilon(1). F(0) has three main subunits: a(1), b(2) and c(10-14). The alpha and beta chains form an alternating ring which encloses part of the gamma chain. F(1) is attached to F(0) by a central stalk formed by the gamma and epsilon chains, while a peripheral stalk is formed by the delta and b chains.

The protein resides in the cell inner membrane. Its function is as follows. F(1)F(0) ATP synthase produces ATP from ADP in the presence of a proton or sodium gradient. F-type ATPases consist of two structural domains, F(1) containing the extramembraneous catalytic core and F(0) containing the membrane proton channel, linked together by a central stalk and a peripheral stalk. During catalysis, ATP synthesis in the catalytic domain of F(1) is coupled via a rotary mechanism of the central stalk subunits to proton translocation. Functionally, key component of the F(0) channel; it plays a direct role in translocation across the membrane. A homomeric c-ring of between 10-14 subunits forms the central stalk rotor element with the F(1) delta and epsilon subunits. The protein is ATP synthase subunit c of Yersinia enterocolitica serotype O:8 / biotype 1B (strain NCTC 13174 / 8081).